The chain runs to 401 residues: Patatin-like protein 4 (401 aa).

The PNPLA domain occupies Leu17–Met218. Positions Gly21–Gly26 match the GXGXXG motif. Residues Gly60–Gly64 carry the GXSXG motif. Residue Ser62 is the Nucleophile of the active site. The active-site Proton acceptor is the Asp205. A DGA/G motif is present at residues Asp205–Gly207.

This sequence belongs to the patatin family.

Its function is as follows. Possesses non-specific lipolytic acyl hydrolase (LAH) activity. Hydrolyzes phospholipids as well as galactolipids. May play a role in disease resistance. This is Patatin-like protein 4 (PLP4) from Arabidopsis thaliana (Mouse-ear cress).